The primary structure comprises 181 residues: Crossover junction endodeoxyribonuclease RuvC (181 aa).

Residues D7, E67, and D139 contribute to the active site. D7, E67, and D139 together coordinate Mg(2+).

The protein belongs to the RuvC family. Homodimer which binds Holliday junction (HJ) DNA. The HJ becomes 2-fold symmetrical on binding to RuvC with unstacked arms; it has a different conformation from HJ DNA in complex with RuvA. In the full resolvosome a probable DNA-RuvA(4)-RuvB(12)-RuvC(2) complex forms which resolves the HJ. It depends on Mg(2+) as a cofactor.

It is found in the cytoplasm. It carries out the reaction Endonucleolytic cleavage at a junction such as a reciprocal single-stranded crossover between two homologous DNA duplexes (Holliday junction).. Its function is as follows. The RuvA-RuvB-RuvC complex processes Holliday junction (HJ) DNA during genetic recombination and DNA repair. Endonuclease that resolves HJ intermediates. Cleaves cruciform DNA by making single-stranded nicks across the HJ at symmetrical positions within the homologous arms, yielding a 5'-phosphate and a 3'-hydroxyl group; requires a central core of homology in the junction. The consensus cleavage sequence is 5'-(A/T)TT(C/G)-3'. Cleavage occurs on the 3'-side of the TT dinucleotide at the point of strand exchange. HJ branch migration catalyzed by RuvA-RuvB allows RuvC to scan DNA until it finds its consensus sequence, where it cleaves and resolves the cruciform DNA. The chain is Crossover junction endodeoxyribonuclease RuvC from Ralstonia nicotianae (strain ATCC BAA-1114 / GMI1000) (Ralstonia solanacearum).